The primary structure comprises 159 residues: UPF0262 protein CCNA_02430 (159 aa).

This sequence belongs to the UPF0262 family.

The protein is UPF0262 protein CCNA_02430 of Caulobacter vibrioides (strain NA1000 / CB15N) (Caulobacter crescentus).